The chain runs to 136 residues: MAKAEHTSTAKPSKPAAPERVAAFRTGLSAEARAAALLIAKGYRILAKRFRTPHGEIDIIARKRDLVTFVEVKARASLDDAAYAVTPRQQQRIIDAAQAWLMTHPEHAEFELRFDAILVAPRSLPRHLIAAFDAST.

The protein belongs to the UPF0102 family.

The sequence is that of UPF0102 protein BBta_0181 from Bradyrhizobium sp. (strain BTAi1 / ATCC BAA-1182).